Here is a 756-residue protein sequence, read N- to C-terminus: 5-methyltetrahydropteroyltriglutamate--homocysteine methyltransferase (756 aa).

5-methyltetrahydropteroyltri-L-glutamate contacts are provided by residues 16–19 (RELK) and K112. Residues 432–434 (IGS) and E485 contribute to the L-homocysteine site. Residues 432 to 434 (IGS) and E485 each bind L-methionine. 5-methyltetrahydropteroyltri-L-glutamate contacts are provided by residues 516 to 517 (RC) and W562. D600 contacts L-homocysteine. D600 contributes to the L-methionine binding site. E606 is a binding site for 5-methyltetrahydropteroyltri-L-glutamate. Zn(2+) contacts are provided by H642, C644, and E666. H695 acts as the Proton donor in catalysis. Zn(2+) is bound at residue C727.

It belongs to the vitamin-B12 independent methionine synthase family. Requires Zn(2+) as cofactor.

It carries out the reaction 5-methyltetrahydropteroyltri-L-glutamate + L-homocysteine = tetrahydropteroyltri-L-glutamate + L-methionine. The protein operates within amino-acid biosynthesis; L-methionine biosynthesis via de novo pathway; L-methionine from L-homocysteine (MetE route): step 1/1. In terms of biological role, catalyzes the transfer of a methyl group from 5-methyltetrahydrofolate to homocysteine resulting in methionine formation. This chain is 5-methyltetrahydropteroyltriglutamate--homocysteine methyltransferase, found in Haemophilus influenzae (strain PittGG).